Here is a 257-residue protein sequence, read N- to C-terminus: Imidazole glycerol phosphate synthase subunit HisF (257 aa).

Active-site residues include Asp12 and Asp131.

The protein belongs to the HisA/HisF family. In terms of assembly, heterodimer of HisH and HisF.

The protein resides in the cytoplasm. The enzyme catalyses 5-[(5-phospho-1-deoxy-D-ribulos-1-ylimino)methylamino]-1-(5-phospho-beta-D-ribosyl)imidazole-4-carboxamide + L-glutamine = D-erythro-1-(imidazol-4-yl)glycerol 3-phosphate + 5-amino-1-(5-phospho-beta-D-ribosyl)imidazole-4-carboxamide + L-glutamate + H(+). It participates in amino-acid biosynthesis; L-histidine biosynthesis; L-histidine from 5-phospho-alpha-D-ribose 1-diphosphate: step 5/9. Functionally, IGPS catalyzes the conversion of PRFAR and glutamine to IGP, AICAR and glutamate. The HisF subunit catalyzes the cyclization activity that produces IGP and AICAR from PRFAR using the ammonia provided by the HisH subunit. The chain is Imidazole glycerol phosphate synthase subunit HisF from Hydrogenovibrio crunogenus (strain DSM 25203 / XCL-2) (Thiomicrospira crunogena).